Here is a 699-residue protein sequence, read N- to C-terminus: Ciliated left-right organizer metallopeptidase (699 aa).

The first 18 residues, 1–18 (MKMWRLLLLGVATGRCLH), serve as a signal peptide directing secretion. The Extracellular segment spans residues 19–663 (EETQKSVRLL…SLDHNPSMTE (645 aa)). A Zn(2+)-binding site is contributed by H238. The active site involves E239. H242 and H318 together coordinate Zn(2+). Residues 664 to 684 (LLLSTGFCLLVLILVGALGTL) traverse the membrane as a helical segment. Residues 685–699 (AYQKRAMLQVAPSTT) are Cytoplasmic-facing.

This sequence belongs to the peptidase M8 family. Zn(2+) is required as a cofactor. Specifically expressed in ciliated left-right organizer.

Its subcellular location is the membrane. Functionally, putative metalloproteinase that plays a role in left-right patterning process. The sequence is that of Ciliated left-right organizer metallopeptidase from Mus musculus (Mouse).